Reading from the N-terminus, the 162-residue chain is Caveolin-2 (162 aa).

The Cytoplasmic portion of the chain corresponds to Met1–Lys86. Residue Tyr19 is modified to Phosphotyrosine; by SRC. Ser20 and Ser23 each carry phosphoserine. Tyr27 carries the post-translational modification Phosphotyrosine; by SRC. Positions Phe87–Leu107 form an intramembrane region, helical. At Ser108–Asp162 the chain is on the cytoplasmic side.

Belongs to the caveolin family. In terms of assembly, monomer or homodimer. Interacts with CAV1; the interaction forms a stable heterooligomeric complex that is required for targeting to lipid rafts and for caveolae formation. Tyrosine phosphorylated forms do not form heterooligomers with the Tyr-19-phosphorylated form existing as a monomer or dimer, and the Tyr-27-form as a monomer only. Interacts (tyrosine phosphorylated form) with the SH2 domain-containing proteins, RASA1, NCK1 and SRC. Interacts (tyrosine phosphorylated form) with INSR, the interaction (Tyr-27-phosphorylated form) is increased on insulin stimulation. Interacts (Tyr-19 phosphorylated form) with MAPK1 (phosphorylated form); the interaction, promoted by insulin, leads to nuclear location and MAPK1 activation. Interacts with STAT3; the interaction is increased on insulin-induced tyrosine phosphorylation leading to STAT activation. In terms of processing, phosphorylated on serine and tyrosine residues. CAV1 promotes phosphorylation on Ser-23 which then targets the complex to the plasma membrane, lipid rafts and caveolae. Phosphorylation on both Tyr-19 and Tyr-27 is required for insulin-induced 'Ser-727' phosphorylation of STAT3 and its activation. Phosphorylation on Tyr-19 is required for insulin-induced phosphorylation of MAPK1 and DNA binding of STAT3. Tyrosine phosphorylation is induced by both EGF and insulin.

The protein resides in the nucleus. The protein localises to the cytoplasm. It localises to the golgi apparatus membrane. Its subcellular location is the cell membrane. It is found in the membrane. The protein resides in the caveola. Its function is as follows. May act as a scaffolding protein within caveolar membranes. Interacts directly with G-protein alpha subunits and can functionally regulate their activity. Acts as an accessory protein in conjunction with CAV1 in targeting to lipid rafts and driving caveolae formation. Positive regulator of cellular mitogenesis of the MAPK signaling pathway. Required for the insulin-stimulated nuclear translocation and activation of MAPK1 and STAT3, and the subsequent regulation of cell cycle progression. The protein is Caveolin-2 (CAV2) of Rhinolophus ferrumequinum (Greater horseshoe bat).